The following is a 180-amino-acid chain: MSRIGRKSIPVPAGVDVTIDGQTVKVKGPKGELSHTLAEPITVERAEDGQLNVARPNDERKAKELHGLSRTLVANMIVGVTEGYRKSLEIAGTGYRVTAKGKDLEFALGFSHPVTVVAPEGITFSVEKPTLFHVAGINKQLVGEVAANIRKIRPPEPYKGKGVKYQGEVIRRKAGKAGKK.

It belongs to the universal ribosomal protein uL6 family. Part of the 50S ribosomal subunit.

This protein binds to the 23S rRNA, and is important in its secondary structure. It is located near the subunit interface in the base of the L7/L12 stalk, and near the tRNA binding site of the peptidyltransferase center. The protein is Large ribosomal subunit protein uL6 of Salinispora arenicola (strain CNS-205).